The primary structure comprises 606 residues: MRSNSCGELRSKHIASNVQLCGWVDRCRDHGGVIFIDLRDRSGTIQITVDPDQGAELFASAESLRNETVLQITGLVRPRPADAINSKLSTGEIEVLADGLEVLNPVTGNLPFTVSIHDEEPVKEELRLRHRHLDLRRERMSRNLQLRHTTIKTARRFLEDEGFIEVETPVLTRSTPEGARDYLVPSRVCSGEWFALPQSPQLFKQLLMVGGLERYYQVARCFRDEDLRADRQPEFTQLDIEMSFMDQEQILKLNERLIATIWKAVKGIDLPLPFPRLTWHEAMDRYGTDRPDTRYGMELNDVSDILKDMGFKVFSGAIAAGGSVKCITVPNGNDLISNVRIKPGGDIFNEAQKAGAGGLAFIRVRDSDEIDSIGAIKDNLNSKQKTALLKQTGAKAGDLILFGAGKTATVNSALDRVRQFLGRELGLIPTDQDNKLWQFLWVVDFPMFELNAEENRLEALHHPFCAPNKDDLGNDPDAWMERLPQARAQAYDLVLNGLELGGGSLRIHNAELQRQVLQTIGLPLEEANQQFGFLIDALEMGAPPHGGLAFGMDRIVMLLTGEDSIRDTIAFPKTQQARCLMTQAPAGVSNHQLEELHVESTWVDPE.

Position 177 (glutamate 177) interacts with L-aspartate. Positions 201–204 are aspartate; that stretch reads QLFK. Arginine 223 is a binding site for L-aspartate. ATP is bound by residues 223 to 225 and glutamine 232; that span reads RDE. Histidine 461 is a binding site for L-aspartate. Glutamate 499 lines the ATP pocket. Residue arginine 506 coordinates L-aspartate. ATP is bound at residue 551-554; sequence GMDR.

It belongs to the class-II aminoacyl-tRNA synthetase family. Type 1 subfamily. Homodimer.

It is found in the cytoplasm. It carries out the reaction tRNA(Asx) + L-aspartate + ATP = L-aspartyl-tRNA(Asx) + AMP + diphosphate. In terms of biological role, aspartyl-tRNA synthetase with relaxed tRNA specificity since it is able to aspartylate not only its cognate tRNA(Asp) but also tRNA(Asn). Reaction proceeds in two steps: L-aspartate is first activated by ATP to form Asp-AMP and then transferred to the acceptor end of tRNA(Asp/Asn). This Prochlorococcus marinus (strain MIT 9303) protein is Aspartate--tRNA(Asp/Asn) ligase.